A 255-amino-acid chain; its full sequence is Pimeloyl-[acyl-carrier protein] methyl ester esterase (255 aa).

Substrate-binding positions include Trp18, 78–79 (SL), and 139–143 (FLALD). The Nucleophile role is filled by Ser78. Active-site residues include Asp203 and His233. His233 contacts substrate.

This sequence belongs to the AB hydrolase superfamily. Carboxylesterase BioH family. In terms of assembly, monomer.

Its subcellular location is the cytoplasm. It catalyses the reaction 6-carboxyhexanoyl-[ACP] methyl ester + H2O = 6-carboxyhexanoyl-[ACP] + methanol + H(+). It functions in the pathway cofactor biosynthesis; biotin biosynthesis. Functionally, the physiological role of BioH is to remove the methyl group introduced by BioC when the pimeloyl moiety is complete. It allows to synthesize pimeloyl-ACP via the fatty acid synthetic pathway through the hydrolysis of the ester bonds of pimeloyl-ACP esters. The chain is Pimeloyl-[acyl-carrier protein] methyl ester esterase from Xylella fastidiosa (strain M12).